A 995-amino-acid chain; its full sequence is Aconitate hydratase 2, mitochondrial (995 aa).

The N-terminal 83 residues, Met1–Asn83, are a transit peptide targeting the mitochondrion. Substrate contacts are provided by residues Gln187 and Asp306–His308. Positions 538, 604, and 607 each coordinate [4Fe-4S] cluster. Residues Arg637, Arg642, Arg800, and Ser881 to Arg882 each bind substrate.

The protein belongs to the aconitase/IPM isomerase family. Monomer. [4Fe-4S] cluster is required as a cofactor. In terms of tissue distribution, mostly expressed in roots, leaves and flowers, also present in stems, and, at low levels, in seeds.

It is found in the mitochondrion. It catalyses the reaction citrate = D-threo-isocitrate. The protein operates within carbohydrate metabolism; tricarboxylic acid cycle; isocitrate from oxaloacetate: step 2/2. Catalyzes the isomerization of citrate to isocitrate via cis-aconitate. Contributes to oxidative stress tolerance. Involved in acetate assimilation. The sequence is that of Aconitate hydratase 2, mitochondrial from Arabidopsis thaliana (Mouse-ear cress).